Here is a 242-residue protein sequence, read N- to C-terminus: Transcriptional regulatory protein GltR (242 aa).

The Response regulatory domain maps to 7–123; that stretch reads SILLVDDDQE…ELLARIKALL (117 aa). The residue at position 56 (Asp-56) is a 4-aspartylphosphate. The segment at residues 134–234 is a DNA-binding region (ompR/PhoB-type); it reads GDVLAFEDWR…VRGSGYLLAA (101 aa).

Phosphorylated by GtrS.

The protein resides in the cytoplasm. Phosphorylation of GltR induces its dissociation from DNA leading to transcriptional activation. Its function is as follows. Member of the two-component regulatory system GtrS/GltR involved in the regulation of glucose metabolism and transport, as well as regulation of the exotoxin A gene expression. GltR controls the transcription of genes involved in glucose metabolism (glk and edd/gap-1) and transport (oprB) as well as the expression of toxA that encodes exotoxin A, the primary virulence factor. Acts as a repressor that is released from its target operators upon phosphorylation. Functionally, contributes to modulation of the type III secretion system (T3SS) in response to host cells via the regulation of the OprB transport system. In Pseudomonas aeruginosa (strain ATCC 15692 / DSM 22644 / CIP 104116 / JCM 14847 / LMG 12228 / 1C / PRS 101 / PAO1), this protein is Transcriptional regulatory protein GltR.